The chain runs to 238 residues: Ribonuclease PH (238 aa).

Residues arginine 86 and 124–126 (GTR) contribute to the phosphate site.

It belongs to the RNase PH family. As to quaternary structure, homohexameric ring arranged as a trimer of dimers.

It catalyses the reaction tRNA(n+1) + phosphate = tRNA(n) + a ribonucleoside 5'-diphosphate. Phosphorolytic 3'-5' exoribonuclease that plays an important role in tRNA 3'-end maturation. Removes nucleotide residues following the 3'-CCA terminus of tRNAs; can also add nucleotides to the ends of RNA molecules by using nucleoside diphosphates as substrates, but this may not be physiologically important. Probably plays a role in initiation of 16S rRNA degradation (leading to ribosome degradation) during starvation. This is Ribonuclease PH from Citrobacter koseri (strain ATCC BAA-895 / CDC 4225-83 / SGSC4696).